The primary structure comprises 361 residues: Histidinol-phosphate aminotransferase (361 aa).

Positions 26–45 (GMDPEDLTKLSSNENPHGPS) are disordered. K222 carries the post-translational modification N6-(pyridoxal phosphate)lysine.

It belongs to the class-II pyridoxal-phosphate-dependent aminotransferase family. Histidinol-phosphate aminotransferase subfamily. Pyridoxal 5'-phosphate serves as cofactor.

The catalysed reaction is L-histidinol phosphate + 2-oxoglutarate = 3-(imidazol-4-yl)-2-oxopropyl phosphate + L-glutamate. It participates in amino-acid biosynthesis; L-histidine biosynthesis; L-histidine from 5-phospho-alpha-D-ribose 1-diphosphate: step 7/9. The chain is Histidinol-phosphate aminotransferase (hisC) from Haloferax volcanii (strain ATCC 29605 / DSM 3757 / JCM 8879 / NBRC 14742 / NCIMB 2012 / VKM B-1768 / DS2) (Halobacterium volcanii).